Consider the following 207-residue polypeptide: BON1-associated protein 2 (207 aa).

The region spanning M1–F112 is the C2 domain.

As to quaternary structure, interacts with BON1, BON2 and BON3. As to expression, expressed in roots, leaves, stems and flowers.

The protein resides in the membrane. Negative regulator of cell death and defense responses. Exhibits calcium-dependent phospholipid binding properties. This Arabidopsis thaliana (Mouse-ear cress) protein is BON1-associated protein 2 (BAP2).